Here is a 209-residue protein sequence, read N- to C-terminus: Orotate phosphoribosyltransferase (209 aa).

5-phospho-alpha-D-ribose 1-diphosphate-binding positions include Arg96, Lys100, His102, and 122–130 (EDLISTGKS). Ser126 is a binding site for orotate.

The protein belongs to the purine/pyrimidine phosphoribosyltransferase family. PyrE subfamily. In terms of assembly, homodimer. It depends on Mg(2+) as a cofactor.

It carries out the reaction orotidine 5'-phosphate + diphosphate = orotate + 5-phospho-alpha-D-ribose 1-diphosphate. It participates in pyrimidine metabolism; UMP biosynthesis via de novo pathway; UMP from orotate: step 1/2. In terms of biological role, catalyzes the transfer of a ribosyl phosphate group from 5-phosphoribose 1-diphosphate to orotate, leading to the formation of orotidine monophosphate (OMP). This is Orotate phosphoribosyltransferase from Coxiella burnetii (strain RSA 493 / Nine Mile phase I).